Consider the following 166-residue polypeptide: NAD(P)H-quinone oxidoreductase subunit I, chloroplastic (166 aa).

2 4Fe-4S ferredoxin-type domains span residues 55 to 84 (GRIHFEFDKCIACEVCVRVCPIDLPVVDWK) and 95 to 124 (LNYSIDFGICIFCGNCVEYCPTNCLSMTEE). Residues Cys64, Cys67, Cys70, Cys74, Cys104, Cys107, Cys110, and Cys114 each contribute to the [4Fe-4S] cluster site.

This sequence belongs to the complex I 23 kDa subunit family. As to quaternary structure, NDH is composed of at least 16 different subunits, 5 of which are encoded in the nucleus. The cofactor is [4Fe-4S] cluster.

It localises to the plastid. Its subcellular location is the chloroplast thylakoid membrane. It catalyses the reaction a plastoquinone + NADH + (n+1) H(+)(in) = a plastoquinol + NAD(+) + n H(+)(out). It carries out the reaction a plastoquinone + NADPH + (n+1) H(+)(in) = a plastoquinol + NADP(+) + n H(+)(out). Functionally, NDH shuttles electrons from NAD(P)H:plastoquinone, via FMN and iron-sulfur (Fe-S) centers, to quinones in the photosynthetic chain and possibly in a chloroplast respiratory chain. The immediate electron acceptor for the enzyme in this species is believed to be plastoquinone. Couples the redox reaction to proton translocation, and thus conserves the redox energy in a proton gradient. This Pentanema britannica (British yellowhead) protein is NAD(P)H-quinone oxidoreductase subunit I, chloroplastic.